The following is a 540-amino-acid chain: Glucose-6-phosphate isomerase (540 aa).

The Proton donor role is filled by Glu-351. Catalysis depends on residues His-382 and Lys-506.

This sequence belongs to the GPI family.

It localises to the cytoplasm. The catalysed reaction is alpha-D-glucose 6-phosphate = beta-D-fructose 6-phosphate. It functions in the pathway carbohydrate biosynthesis; gluconeogenesis. It participates in carbohydrate degradation; glycolysis; D-glyceraldehyde 3-phosphate and glycerone phosphate from D-glucose: step 2/4. In terms of biological role, catalyzes the reversible isomerization of glucose-6-phosphate to fructose-6-phosphate. In Corynebacterium glutamicum (strain ATCC 13032 / DSM 20300 / JCM 1318 / BCRC 11384 / CCUG 27702 / LMG 3730 / NBRC 12168 / NCIMB 10025 / NRRL B-2784 / 534), this protein is Glucose-6-phosphate isomerase.